Here is a 166-residue protein sequence, read N- to C-terminus: Putative membrane protein 164 (166 aa).

Topologically, residues 1 to 4 are intravirion; sequence MYHP. Residues 5 to 25 traverse the membrane as a helical segment; it reads VVQVLIGLILVIILILGFYHL. The Virion surface portion of the chain corresponds to 26–166; that stretch reads KKKSCKTDTD…TIMGIARNIL (141 aa).

Belongs to the asfivirus envelope protein p22 family.

It is found in the virion membrane. The protein resides in the host cell membrane. The sequence is that of Putative membrane protein 164 from Ornithodoros (relapsing fever ticks).